A 677-amino-acid polypeptide reads, in one-letter code: MAHRSPALCLLLLHAACLCLAQLRGPPGEPGPRGPPGPPGVPGADGIDGDKGSPGAPGSPGAKGEPGAPGPDGPPGKPGLDGLTGAKGSRGPWGGQGLKGQPGLPGPPGLPGPSLPGPPGLPGQVGLPGEIGVPGPKGDPGPDGPRGPPGPPGKPGPPGHIQGVEGSADFLCPTNCPPGPKGPQGLQGLKGHRGRPGALGEPGQQGKQGPKGDVGVSGEQGVPGPPGPQGQRGYPGMAGPKGETGPAGYKGMVGTIGAAGRPGREGPKGPPGDPGEKGELGGRGIRGPQGDIGPKGDMGLPGIDGKDGTPGIPGVKGTAGQPGRPGPPGHRGQAGLPGQPGSKGGPGDKGEVGARGQQGITGTPGLDGEPGPPGDAGTAGVPGLKGDRGERGPVGAPGEAGQSGPKGEQGPPGIPGPQGLPGVKGDKGSPGKTGPKGSTGDPGVHGLAGVKGEKGESGEPGPKGQQGIQGELGFPGPSGDAGSPGVRGYPGPPGPRGLLGERGVPGMPGQRGVAGRDAGDQHIIDVVLKMMQEQLAEVAVSAKRAALGGVGAMGPPGPPGPPGPPGEQGLHGPMGPRGVPGLLGAAGQIGNIGPKGKRGEKGERGDTGRGHPGMPGPPGIPGLPGIPGHALAGKDGERGPPGVPGDAGRPGSPGPAGLPGFCEPAACLGALPTPRHG.

The signal sequence occupies residues 1–21 (MAHRSPALCLLLLHAACLCLA). Positions 25-161 (GPPGEPGPRG…PGKPGPPGHI (137 aa)) are triple-helical region 4 (COL4). Over residues 28-41 (GEPGPRGPPGPPGV) the composition is skewed to pro residues. The segment at 28–516 (GEPGPRGPPG…MPGQRGVAGR (489 aa)) is disordered. Positions 53–66 (SPGAPGSPGAKGEP) are enriched in low complexity. Positions 68–77 (APGPDGPPGK) are enriched in pro residues. Residues 91–100 (GPWGGQGLKG) are compositionally biased toward gly residues. Composition is skewed to pro residues over residues 104-121 (LPGP…PPGL) and 137-158 (KGDP…PGPP). Pro158 is subject to 4-hydroxyproline. The segment at 162-178 (QGVEGSADFLCPTNCPP) is nonhelical region 4 (NC4). Ser167 is a glycosylation site (O-linked (Xyl...) (glycosaminoglycan) serine). A 4-hydroxyproline modification is found at Pro178. The segment at 179–517 (GPKGPQGLQG…PGQRGVAGRD (339 aa)) is triple-helical region 3 (COL3). 5-hydroxylysine is present on Lys181. O-linked (Gal...) hydroxylysine glycosylation is present at Lys181. At Lys190 the chain carries Allysine. Low complexity-rich tracts occupy residues 363–382 (TPGL…AGVP), 430–442 (PGKT…TGDP), and 496–505 (RGLLGERGVP). A nonhelical region 3 (NC3) region spans residues 518–547 (AGDQHIIDVVLKMMQEQLAEVAVSAKRAAL). The interval 548–630 (GGVGAMGPPG…PGLPGIPGHA (83 aa)) is triple-helical region 2 (COL2). Residues 550–657 (VGAMGPPGPP…GRPGSPGPAG (108 aa)) are disordered. Pro residues predominate over residues 555–565 (PPGPPGPPGPP). Residues 597–609 (KRGEKGERGDTGR) are compositionally biased toward basic and acidic residues. Residues 631-632 (LA) form a nonhelical region 2 (NC2) region. Residues 633–662 (GKDGERGPPGVPGDAGRPGSPGPAGLPGFC) are triple-helical region 1 (COL1). The segment at 663-677 (EPAACLGALPTPRHG) is nonhelical region 1 (NC1).

The protein belongs to the fibril-associated collagens with interrupted helices (FACIT) family. In terms of assembly, heterotrimer of an alpha 1(IX), an alpha 2(IX) and an alpha 3(IX) chain. The chains are linked to each other by interchain disulfide bonds. Trimers are also cross-linked via hydroxylysines. Covalently linked to the telopeptides of type II collagen by lysine-derived cross-links. In terms of processing, prolines at the third position of the tripeptide repeating unit (G-X-Y) are hydroxylated in some or all of the chains.

The protein resides in the secreted. It localises to the extracellular space. It is found in the extracellular matrix. Its function is as follows. Structural component of hyaline cartilage and vitreous of the eye. The polypeptide is Collagen alpha-2(IX) chain (COL9A2) (Gallus gallus (Chicken)).